Here is a 416-residue protein sequence, read N- to C-terminus: Signal recognition particle receptor FtsY (416 aa).

Residues 1–10 (MFSFFRRKKK) are compositionally biased toward basic residues. The interval 1 to 24 (MFSFFRRKKKQETPALEEAQVQET) is disordered. GTP-binding positions include 224-231 (GINGAGKT), 304-308 (DTAGR), and 368-371 (TKLD).

It belongs to the GTP-binding SRP family. FtsY subfamily. As to quaternary structure, part of the signal recognition particle protein translocation system, which is composed of SRP and FtsY. SRP is a ribonucleoprotein composed of Ffh and a 4.5S RNA molecule. Mg(2+) serves as cofactor.

It localises to the cell membrane. It is found in the cytoplasm. The catalysed reaction is GTP + H2O = GDP + phosphate + H(+). In terms of biological role, involved in targeting and insertion of nascent membrane proteins into the cytoplasmic membrane. Acts as a receptor for the complex formed by the signal recognition particle (SRP) and the ribosome-nascent chain (RNC). Interaction with SRP-RNC leads to the transfer of the RNC complex to the Sec translocase for insertion into the membrane, the hydrolysis of GTP by both Ffh and FtsY, and the dissociation of the SRP-FtsY complex into the individual components. This chain is Signal recognition particle receptor FtsY, found in Neisseria gonorrhoeae.